Consider the following 339-residue polypeptide: Ketol-acid reductoisomerase (NADP(+)) (339 aa).

Positions 1–182 constitute a KARI N-terminal Rossmann domain; it reads MKVYYDADCD…GGGRSGIIET (182 aa). Residues 24–27, Arg48, Ser51, Ser53, and 83–86 each bind NADP(+); these read YGSQ and DEHQ. The active site involves His108. Residue Gly134 participates in NADP(+) binding. Residues 183 to 328 enclose the KARI C-terminal knotted domain; it reads NFREECETDL…AKLRAMMPWI (146 aa). Positions 191, 195, 227, and 231 each coordinate Mg(2+). Ser252 contacts substrate.

Belongs to the ketol-acid reductoisomerase family. It depends on Mg(2+) as a cofactor.

It carries out the reaction (2R)-2,3-dihydroxy-3-methylbutanoate + NADP(+) = (2S)-2-acetolactate + NADPH + H(+). The catalysed reaction is (2R,3R)-2,3-dihydroxy-3-methylpentanoate + NADP(+) = (S)-2-ethyl-2-hydroxy-3-oxobutanoate + NADPH + H(+). It participates in amino-acid biosynthesis; L-isoleucine biosynthesis; L-isoleucine from 2-oxobutanoate: step 2/4. Its pathway is amino-acid biosynthesis; L-valine biosynthesis; L-valine from pyruvate: step 2/4. Its function is as follows. Involved in the biosynthesis of branched-chain amino acids (BCAA). Catalyzes an alkyl-migration followed by a ketol-acid reduction of (S)-2-acetolactate (S2AL) to yield (R)-2,3-dihydroxy-isovalerate. In the isomerase reaction, S2AL is rearranged via a Mg-dependent methyl migration to produce 3-hydroxy-3-methyl-2-ketobutyrate (HMKB). In the reductase reaction, this 2-ketoacid undergoes a metal-dependent reduction by NADPH to yield (R)-2,3-dihydroxy-isovalerate. The polypeptide is Ketol-acid reductoisomerase (NADP(+)) (Novosphingobium aromaticivorans (strain ATCC 700278 / DSM 12444 / CCUG 56034 / CIP 105152 / NBRC 16084 / F199)).